The sequence spans 296 residues: Formamidopyrimidine-DNA glycosylase (296 aa).

The active-site Schiff-base intermediate with DNA is the Pro-2. Glu-3 serves as the catalytic Proton donor. The active-site Proton donor; for beta-elimination activity is Lys-61. 3 residues coordinate DNA: His-95, Arg-122, and Lys-169. The FPG-type zinc finger occupies 255–289 (NAYGRNDQPCARCGTPIQRETFMNRSSYSCPRCQP). The Proton donor; for delta-elimination activity role is filled by Arg-279.

It belongs to the FPG family. As to quaternary structure, monomer. Zn(2+) serves as cofactor.

The enzyme catalyses Hydrolysis of DNA containing ring-opened 7-methylguanine residues, releasing 2,6-diamino-4-hydroxy-5-(N-methyl)formamidopyrimidine.. The catalysed reaction is 2'-deoxyribonucleotide-(2'-deoxyribose 5'-phosphate)-2'-deoxyribonucleotide-DNA = a 3'-end 2'-deoxyribonucleotide-(2,3-dehydro-2,3-deoxyribose 5'-phosphate)-DNA + a 5'-end 5'-phospho-2'-deoxyribonucleoside-DNA + H(+). Involved in base excision repair of DNA damaged by oxidation or by mutagenic agents. Acts as a DNA glycosylase that recognizes and removes damaged bases. Has a preference for oxidized purines, such as 7,8-dihydro-8-oxoguanine (8-oxoG). Has AP (apurinic/apyrimidinic) lyase activity and introduces nicks in the DNA strand. Cleaves the DNA backbone by beta-delta elimination to generate a single-strand break at the site of the removed base with both 3'- and 5'-phosphates. The chain is Formamidopyrimidine-DNA glycosylase from Thermobifida fusca (strain YX).